The chain runs to 639 residues: Sperm-associated antigen 16 protein (639 aa).

Residues 146 to 218 (DVYSQVMLLE…GLKLHYASYE (73 aa)) adopt a coiled-coil conformation. A disordered region spans residues 280 to 333 (RESGDRAGHSCEKENSSEGPTQKSLREAREEVGYKSKLKNEKKDSEFPVDMQPD). Basic and acidic residues-rich tracts occupy residues 281 to 295 (ESGD…KENS) and 303 to 325 (SLRE…KDSE). WD repeat units follow at residues 358–397 (LHEL…VLLT), 400–439 (GHTD…CTLT), 442–481 (GHNH…CRYT), 484–523 (GHTD…CEQS), 526–565 (GHMH…PIVS), 568–608 (VGPS…HKLV), and 609–639 (GHES…RLWI).

In terms of assembly, interacts with SPAG6 and STK36. Phosphorylated by TSSK2. Expressed in testis.

It localises to the cytoplasm. Its subcellular location is the cytoskeleton. The protein resides in the cilium axoneme. The protein localises to the flagellum axoneme. It is found in the cell projection. It localises to the cilium. Its subcellular location is the flagellum. In terms of biological role, necessary for sperm flagellar function. Plays a role in motile ciliogenesis. May help to recruit STK36 to the cilium or apical surface of the cell to initiate subsequent steps of construction of the central pair apparatus of motile cilia. The protein is Sperm-associated antigen 16 protein (Spag16) of Mus musculus (Mouse).